Reading from the N-terminus, the 493-residue chain is Lysine--tRNA ligase (493 aa).

Mg(2+) contacts are provided by E402 and E409.

It belongs to the class-II aminoacyl-tRNA synthetase family. As to quaternary structure, homodimer. Requires Mg(2+) as cofactor.

It is found in the cytoplasm. It carries out the reaction tRNA(Lys) + L-lysine + ATP = L-lysyl-tRNA(Lys) + AMP + diphosphate. The protein is Lysine--tRNA ligase of Ureaplasma parvum serovar 3 (strain ATCC 27815 / 27 / NCTC 11736).